Consider the following 315-residue polypeptide: Cytochrome c biogenesis protein CcsA (315 aa).

Helical transmembrane passes span 15-35 (SCFL…GFGG), 39-59 (FSFT…LQLI), 73-93 (LYES…YIEV), 97-117 (TLFL…FTDF), 144-164 (VMIA…AYLV), 222-242 (TIGI…IWAN), 257-277 (WAFI…VGGW), and 283-303 (ALVA…VNLL).

It belongs to the CcmF/CycK/Ccl1/NrfE/CcsA family. May interact with Ccs1.

The protein localises to the plastid. Its subcellular location is the chloroplast thylakoid membrane. Its function is as follows. Required during biogenesis of c-type cytochromes (cytochrome c6 and cytochrome f) at the step of heme attachment. This Chlorella vulgaris (Green alga) protein is Cytochrome c biogenesis protein CcsA.